The primary structure comprises 351 residues: Secreted frizzled-related sequence protein 4 (351 aa).

A signal peptide spans 1 to 18; the sequence is MLRSILVALCLWLRLALG. Positions 19 to 139 constitute an FZ domain; sequence VRGAPCEAVR…VYDRGVCISP (121 aa). Intrachain disulfides connect Cys-24–Cys-85, Cys-32–Cys-78, Cys-69–Cys-108, Cys-97–Cys-136, and Cys-101–Cys-125. Asn-38 and Asn-68 each carry an N-linked (GlcNAc...) asparagine glycan. 3 N-linked (GlcNAc...) asparagine glycosylation sites follow: Asn-116, Asn-194, and Asn-240. The NTR domain maps to 178–306; that stretch reads CKCKKVKPTL…TIQDKKQIAS (129 aa). Basic and acidic residues predominate over residues 293–303; sequence EQQRTIQDKKQ. The disordered stretch occupies residues 293–351; it reads EQQRTIQDKKQIASRTSRTSRSNPPKSKGRPPAPKPASPKKNIKARSAPKKSNLKKSAS. The span at 306 to 318 shows a compositional bias: low complexity; that stretch reads SRTSRTSRSNPPK. Positions 333–351 are enriched in basic residues; the sequence is KNIKARSAPKKSNLKKSAS.

This sequence belongs to the secreted frizzled-related protein (sFRP) family. Expressed in the ovary. Localized to granulosa cells of periovulatory follicles and corpora lutea. Weakly expressed in adult tissues including kidney, brain and lung.

The protein resides in the secreted. Functionally, soluble frizzled-related proteins (sFRPS) function as modulators of Wnt signaling through direct interaction with Wnts. They have a role in regulating cell growth and differentiation in specific cell types. SFRP4 plays a role in bone morphogenesis. May also act as a regulator of adult uterine morphology and function. May also increase apoptosis during ovulation possibly through modulation of FZ1/FZ4/WNT4 signaling. Has phosphaturic effects by specifically inhibiting sodium-dependent phosphate uptake. The sequence is that of Secreted frizzled-related sequence protein 4 (Sfrp4) from Mus musculus (Mouse).